The primary structure comprises 73 residues: Small ribosomal subunit protein bS18c (73 aa).

Belongs to the bacterial ribosomal protein bS18 family. Part of the 30S ribosomal subunit.

It localises to the plastid. It is found in the chloroplast. In Guillardia theta (Cryptophyte), this protein is Small ribosomal subunit protein bS18c (rps18).